A 390-amino-acid polypeptide reads, in one-letter code: Aspartate beta-hydroxylase domain-containing protein 1 (390 aa).

Residues 1-54 (MKEGRGSFSVERGPRKERETAQSGMWKGNSPAGSQGAAMEGTGGELGGQGNWGP) are disordered. The Cytoplasmic portion of the chain corresponds to 1 to 72 (MKEGRGSFSV…RASLIMLPWP (72 aa)). The span at 41 to 51 (GTGGELGGQGN) shows a compositional bias: gly residues. Residues 73-95 (LPLASSALTLLFGALTSLFLWYC) traverse the membrane as a helical segment. Over 96-390 (YRLGSQDMQA…ALDFVFAPDP (295 aa)) the chain is Lumenal. The interval 116–143 (RGGPVGCSEAGGPSPGGPGDPGEGPRTE) is disordered. Gly residues predominate over residues 128 to 137 (PSPGGPGDPG). Residue Ser-129 is modified to Phosphoserine.

Belongs to the aspartyl/asparaginyl beta-hydroxylase family.

It localises to the membrane. This Homo sapiens (Human) protein is Aspartate beta-hydroxylase domain-containing protein 1 (ASPHD1).